We begin with the raw amino-acid sequence, 359 residues long: Ferredoxin--NADP reductase (359 aa).

Positions 48, 56, 61, 101, 139, 304, and 345 each coordinate FAD.

Belongs to the ferredoxin--NADP reductase type 2 family. In terms of assembly, homodimer. Requires FAD as cofactor.

The enzyme catalyses 2 reduced [2Fe-2S]-[ferredoxin] + NADP(+) + H(+) = 2 oxidized [2Fe-2S]-[ferredoxin] + NADPH. This chain is Ferredoxin--NADP reductase, found in Ralstonia pickettii (strain 12J).